The primary structure comprises 236 residues: uncharacterized protein (236 aa).

Residues 1–73 are disordered; it reads MEPGGSENAA…GGGWGWGNTQ (73 aa).

This is an uncharacterized protein from Homo sapiens (Human).